The following is a 371-amino-acid chain: MTDATPTLTPKPWISGIAPYVPGKSAGADGRPLIKLSANENPLGTGEKARAAFAAVQSAPDALSRYPDPGSVELRAAIAAKYGLDPDRVICGNGSDELLHLAAGTYAGPGDEILYVRYGFAVYEIAARRVGAVPVEADDRDFATDVDALLAAVTDRTRVVYLANPNNPTGTLATREEVGRLYAGLPQNVLFVIDQAYAEYLTPDEDDGGLELAKTRPNVFVTRTFSKIHGLAAERIGWGYASADVIAALHRIRLPFNVTRAGQAAAVAALGDDDFVNRSRAHNARWRAWLAAELESLGNHGVRVVPSATNFLLVLFEGAVSAETVYHRLMDAGYIVRWLPGQGIPQALRMTIGTEDETRGLATAIRAALAG.

At lysine 227 the chain carries N6-(pyridoxal phosphate)lysine.

The protein belongs to the class-II pyridoxal-phosphate-dependent aminotransferase family. Histidinol-phosphate aminotransferase subfamily. In terms of assembly, homodimer. It depends on pyridoxal 5'-phosphate as a cofactor.

It catalyses the reaction L-histidinol phosphate + 2-oxoglutarate = 3-(imidazol-4-yl)-2-oxopropyl phosphate + L-glutamate. It functions in the pathway amino-acid biosynthesis; L-histidine biosynthesis; L-histidine from 5-phospho-alpha-D-ribose 1-diphosphate: step 7/9. The polypeptide is Histidinol-phosphate aminotransferase (Sphingopyxis alaskensis (strain DSM 13593 / LMG 18877 / RB2256) (Sphingomonas alaskensis)).